Reading from the N-terminus, the 414-residue chain is EARP and GARP complex-interacting protein 1 (414 aa).

Met-1 carries the N-acetylmethionine modification. WD repeat units lie at residues 159–199, 209–249, 253–293, and 297–337; these read TAHG…SQAV, KGQL…QIYC, AHGQ…EPVK, and EHSH…SEPF. A disordered region spans residues 337-362; it reads FGHLVDDDDISDQEDHRSEEKSKEPL. Ser-347 is modified (phosphoserine). Residues 349-362 show a composition bias toward basic and acidic residues; that stretch reads QEDHRSEEKSKEPL. The WD 5 repeat unit spans residues 372–412; that stretch reads EHEDSVYAVDWSSADPWLFASLSYDGRLVINRVPRALKYHI.

This sequence belongs to the WD repeat EIPR1 family. Interacts with two multisubunit tethering complexes: EARP composed of VPS50, VPS51, VPS52 and VPS53 subunits and GARP complex composed of VPS51, VPS52, VPS53 and VPS54 subunits. Interacts with SNAP29.

It localises to the golgi apparatus. The protein resides in the trans-Golgi network. Acts as a component of endosomal retrieval machinery that is involved in protein transport from early endosomes to either recycling endosomes or the trans-Golgi network. Mediates the recruitment of Golgi-associated retrograde protein (GARP) complex to the trans-Golgi network and controls early endosome-to-Golgi transport of internalized protein. Promotes the recycling of internalized transferrin receptor (TFRC) to the plasma membrane through interaction with endosome-associated recycling protein (EARP) complex. Controls proper insulin distribution and secretion, and retention of cargo in mature dense core vesicles. Required for the stability of the endosome-associated retrograde protein (EARP) complex subunits and for proper localization and association of EARP with membranes. The protein is EARP and GARP complex-interacting protein 1 of Pongo abelii (Sumatran orangutan).